Reading from the N-terminus, the 335-residue chain is Ubiquinone biosynthesis protein COQ4, mitochondrial (335 aa).

Residues 1-10 constitute a mitochondrion transit peptide; sequence MLRLSLLRST. Positions 210, 211, 214, and 226 each coordinate Zn(2+).

Belongs to the COQ4 family. In terms of assembly, component of a multi-subunit COQ enzyme complex, composed of at least COQ3, COQ4, COQ5, COQ6, COQ7 and COQ9. Interacts with COQ3. The cofactor is Zn(2+).

Its subcellular location is the mitochondrion inner membrane. The catalysed reaction is 4-hydroxy-3-methoxy-5-(all-trans-hexaprenyl)benzoate + H(+) = 2-methoxy-6-(all-trans-hexaprenyl)phenol + CO2. The protein operates within cofactor biosynthesis; ubiquinone biosynthesis. In terms of biological role, lyase that catalyzes the C1-decarboxylation of 4-hydroxy-3-methoxy-5-(all-trans-hexaprenyl)benzoic acid into 2-methoxy-6-(all-trans-hexaprenyl)phenol during ubiquinone biosynthesis. May play a role in organizing a multi-subunit COQ enzyme complex required for coenzyme Q biosynthesis. Required for steady-state levels of COQ3, COQ4, COQ6, COQ7 and COQ9 polypeptides. The chain is Ubiquinone biosynthesis protein COQ4, mitochondrial from Saccharomyces cerevisiae (strain ATCC 204508 / S288c) (Baker's yeast).